The chain runs to 196 residues: ATP-dependent Clp protease proteolytic subunit (196 aa).

S101 (nucleophile) is an active-site residue. H126 is a catalytic residue.

Belongs to the peptidase S14 family. As to quaternary structure, component of the chloroplastic Clp protease core complex.

The protein resides in the plastid. The protein localises to the chloroplast stroma. It carries out the reaction Hydrolysis of proteins to small peptides in the presence of ATP and magnesium. alpha-casein is the usual test substrate. In the absence of ATP, only oligopeptides shorter than five residues are hydrolyzed (such as succinyl-Leu-Tyr-|-NHMec, and Leu-Tyr-Leu-|-Tyr-Trp, in which cleavage of the -Tyr-|-Leu- and -Tyr-|-Trp bonds also occurs).. Functionally, cleaves peptides in various proteins in a process that requires ATP hydrolysis. Has a chymotrypsin-like activity. Plays a major role in the degradation of misfolded proteins. The sequence is that of ATP-dependent Clp protease proteolytic subunit from Lepidium virginicum (Virginia pepperweed).